We begin with the raw amino-acid sequence, 82 residues long: MATFPPATSAPQQPPGPEDEDSSLDESDLYSLAHSYLGGGGRKGRTKREAAANTNRPSPGGHERKLVTKLQNSERKKRGARR.

Residues 1 to 82 are disordered; sequence MATFPPATSA…SERKKRGARR (82 aa). The span at 17–28 shows a compositional bias: acidic residues; that stretch reads PEDEDSSLDESD. The Nuclear localization signal motif lies at 65-82; the sequence is KLVTKLQNSERKKRGARR.

Belongs to the NUPR family. Monomer. Directly interacts with MSL1 and binds MORF4L1, two components of histone acetyltransferase complex; the interaction with MORF4L1 may be mediated by MSL1. Interacts with EP300; this interaction enhances the effect of EP300 on PAX2 transcription factor activity. Interacts with PAXIP1; this interaction prevents PAXIP1 inhibition of PAX2 transcription factor activity. Interacts with COPS5; this interaction allows COPS5-dependent CDKN1B nuclear to cytoplasm translocation. Interacts with RNF2. Interacts with FOXO3; this interaction represses FOXO3 transactivation. Interacts with PTMA; negatively regulates apoptotic process. Interacts with MYOD1, EP300 and DDX5; this interaction coordinates the association of anti-proliferative and pro-myogenic proteins at the myogenin promoter. Interacts with TP53; interaction is stress-dependent. Forms a complex with EP300 and TP53; this complex binds CDKN1A promoter leading to transcriptional induction of CDKN1A. Post-translationally, phosphorylated in vitro by PKA and CK. Phosphorylation promotes DNA-binding activity. In terms of processing, acetylated by EP300 in vitro. Widely expressed, with high levels in liver, pancreas, prostate, ovary, colon, thyroid, spinal cord, trachea and adrenal gland, moderate levels in heart, placenta, lung, skeletal muscle, kidney, testis, small intestine, stomach and lymph node, and low levels in brain, spleen, thymus and bone marrow. Not detected in peripheral blood leukocytes.

It is found in the nucleus. It localises to the cytoplasm. Its subcellular location is the perinuclear region. In terms of biological role, transcription regulator that converts stress signals into a program of gene expression that empowers cells with resistance to the stress induced by a change in their microenvironment. Thereby participates in the regulation of many processes namely cell-cycle, apoptosis, autophagy and DNA repair responses. Controls cell cycle progression and protects cells from genotoxic stress induced by doxorubicin through the complex formation with TP53 and EP300 that binds CDKN1A promoter leading to transcriptional induction of CDKN1A. Protects pancreatic cancer cells from stress-induced cell death by binding the RELB promoter and activating its transcription, leading to IER3 transactivation. Negatively regulates apoptosis through interaction with PTMA. Inhibits autophagy-induced apoptosis in cardiac cells through FOXO3 interaction, inducing cytoplasmic translocation of FOXO3 thereby preventing the FOXO3 association with the pro-autophagic BNIP3 promoter. Inhibits cell growth and facilitates programmed cell death by apoptosis after adriamycin-induced DNA damage through transactivation of TP53. Regulates methamphetamine-induced apoptosis and autophagy through DDIT3-mediated endoplasmic reticulum stress pathway. Participates in DNA repair following gamma-irradiation by facilitating DNA access of the transcription machinery through interaction with MSL1 leading to inhibition of histone H4' Lys-16' acetylation (H4K16ac). Coactivator of PAX2 transcription factor activity, both by recruiting EP300 to increase PAX2 transcription factor activity and by binding PAXIP1 to suppress PAXIP1-induced inhibition on PAX2. Positively regulates cell cycle progression through interaction with COPS5 inducing cytoplasmic translocation of CDKN1B leading to the CDKN1B degradation. Coordinates, through its interaction with EP300, the assiociation of MYOD1, EP300 and DDX5 to the MYOG promoter, leading to inhibition of cell-cycle progression and myogenic differentiation promotion. Negatively regulates beta cell proliferation via inhibition of cell-cycle regulatory genes expression through the suppression of their promoter activities. Also required for LHB expression and ovarian maturation. Exacerbates CNS inflammation and demyelination upon cuprizone treatment. The sequence is that of Nuclear protein 1 from Homo sapiens (Human).